The chain runs to 256 residues: Small ribosomal subunit protein eS1 (256 aa).

The segment covering 1-18 (MAVGKNKRLSKGKKGLKK) has biased composition (basic residues). A disordered region spans residues 1–20 (MAVGKNKRLSKGKKGLKKRT). A2 carries the post-translational modification N-acetylalanine; partial.

This sequence belongs to the eukaryotic ribosomal protein eS1 family. Component of the small ribosomal subunit. Mature ribosomes consist of a small (40S) and a large (60S) subunit. The 40S subunit contains about 33 different proteins and 1 molecule of RNA (18S). The 60S subunit contains about 49 different proteins and 3 molecules of RNA (25S, 5.8S and 5S).

The protein resides in the cytoplasm. This is Small ribosomal subunit protein eS1 (rps1) from Talaromyces stipitatus (strain ATCC 10500 / CBS 375.48 / QM 6759 / NRRL 1006) (Penicillium stipitatum).